Consider the following 147-residue polypeptide: Hemoglobin subunit gamma-1 (147 aa).

The Globin domain occupies 3–147 (NFTAEDKAAI…VASALGSRYH (145 aa)). Threonine 13 carries the phosphothreonine modification. A phosphoserine mark is found at serine 45, serine 51, and serine 53. At lysine 60 the chain carries N6-acetyllysine. Histidine 64 contacts heme b. Lysine 83 is subject to N6-acetyllysine. A heme b-binding site is contributed by histidine 93. Cysteine 94 is subject to S-nitrosocysteine. Serine 140 bears the Phosphoserine mark.

This sequence belongs to the globin family. Heterotetramer of two alpha chains and two gamma chains in fetal hemoglobin (Hb F). Red blood cells.

In terms of biological role, gamma chains make up the fetal hemoglobin F, in combination with alpha chains. The polypeptide is Hemoglobin subunit gamma-1 (HBG1) (Sapajus apella (Brown-capped capuchin)).